The primary structure comprises 195 residues: uncharacterized protein (195 aa).

The first 17 residues, 1 to 17 (MKASLITAFVLPLLALA), serve as a signal peptide directing secretion. Asparagine 75 carries N-linked (GlcNAc...) asparagine glycosylation.

The protein resides in the secreted. This is an uncharacterized protein from Arthroderma benhamiae (strain ATCC MYA-4681 / CBS 112371) (Trichophyton mentagrophytes).